The primary structure comprises 152 residues: 6,7-dimethyl-8-ribityllumazine synthase (152 aa).

5-amino-6-(D-ribitylamino)uracil is bound by residues F22, 54 to 56 (AFE), and 78 to 80 (AVI). 83–84 (ET) provides a ligand contact to (2S)-2-hydroxy-3-oxobutyl phosphate. The active-site Proton donor is H86. Residue F111 coordinates 5-amino-6-(D-ribitylamino)uracil. R125 serves as a coordination point for (2S)-2-hydroxy-3-oxobutyl phosphate.

This sequence belongs to the DMRL synthase family.

The catalysed reaction is (2S)-2-hydroxy-3-oxobutyl phosphate + 5-amino-6-(D-ribitylamino)uracil = 6,7-dimethyl-8-(1-D-ribityl)lumazine + phosphate + 2 H2O + H(+). The protein operates within cofactor biosynthesis; riboflavin biosynthesis; riboflavin from 2-hydroxy-3-oxobutyl phosphate and 5-amino-6-(D-ribitylamino)uracil: step 1/2. Its function is as follows. Catalyzes the formation of 6,7-dimethyl-8-ribityllumazine by condensation of 5-amino-6-(D-ribitylamino)uracil with 3,4-dihydroxy-2-butanone 4-phosphate. This is the penultimate step in the biosynthesis of riboflavin. The sequence is that of 6,7-dimethyl-8-ribityllumazine synthase from Limosilactobacillus reuteri (strain DSM 20016) (Lactobacillus reuteri).